The following is a 440-amino-acid chain: Cell division protein DivIB (440 aa).

The segment covering Met1–Gln10 has biased composition (basic and acidic residues). Disordered stretches follow at residues Met1–Ile97 and Gln123–Lys154. At Met1–Tyr174 the chain is on the cytoplasmic side. Over residues Glu12–Glu21 the composition is skewed to acidic residues. Positions Thr27–Ala39 are enriched in basic residues. Over residues Asp78 to Asn87 the composition is skewed to low complexity. The span at Asn88–Ile97 shows a compositional bias: acidic residues. Over residues His124 to Asp134 the composition is skewed to polar residues. Residues Ser175–Leu195 traverse the membrane as a helical segment. The 69-residue stretch at Ser196–Asn264 folds into the POTRA domain. Over Ser196–Asn440 the chain is Extracellular. The tract at residues Tyr397–Asn440 is disordered. Residues Glu406 to Leu425 are compositionally biased toward basic and acidic residues. Over residues Ser427 to Asn440 the composition is skewed to polar residues.

This sequence belongs to the FtsQ/DivIB family. DivIB subfamily.

It localises to the cell membrane. In terms of biological role, cell division protein that may be involved in stabilizing or promoting the assembly of the division complex. This Staphylococcus aureus (strain MRSA252) protein is Cell division protein DivIB.